The chain runs to 299 residues: Zinc-alpha-2-glycoprotein (299 aa).

A signal peptide spans 1–17 (MVPVLLALLLLLGPAVS). Residues asparagine 24, asparagine 125, and asparagine 256 are each glycosylated (N-linked (GlcNAc...) asparagine). 2 cysteine pairs are disulfide-bonded: cysteine 120-cysteine 183 and cysteine 222-cysteine 277. An Ig-like C1-type domain is found at 204–289 (PSVSVTGHAA…EHRSLTRPLT (86 aa)).

It belongs to the MHC class I family. As to quaternary structure, interacts with PIP.

The protein resides in the secreted. Functionally, stimulates lipid degradation in adipocytes and causes the extensive fat losses associated with some advanced cancers. This is Zinc-alpha-2-glycoprotein (AZGP1) from Bos taurus (Bovine).